The following is a 391-amino-acid chain: Nuclear hormone receptor family member nhr-115 (391 aa).

The nuclear receptor DNA-binding region spans 5–77 (LFPCQICGQN…IGMDASKFQY (73 aa)). Residues 8–28 (CQICGQNSHGTHFGIVSCRAC) form an NR C4-type zinc finger. The segment at 41–65 (ARKGCLTNFKDKGSCFCKPCRLRKC) adopts an NR C4-type; atypical zinc-finger fold. Residues 130–388 (YLDHGCETPI…FSHPEMFDDS (259 aa)) enclose the NR LBD domain.

Belongs to the nuclear hormone receptor family.

It localises to the nucleus. In terms of biological role, orphan nuclear receptor. This Caenorhabditis elegans protein is Nuclear hormone receptor family member nhr-115 (nhr-115).